The chain runs to 337 residues: DNA-directed RNA polymerase subunit alpha (337 aa).

An alpha N-terminal domain (alpha-NTD) region spans residues Met-1–Thr-231. The alpha C-terminal domain (alpha-CTD) stretch occupies residues Asn-248–Gly-337.

This sequence belongs to the RNA polymerase alpha chain family. Homodimer. The RNAP catalytic core consists of 2 alpha, 1 beta, 1 beta' and 1 omega subunit. When a sigma factor is associated with the core the holoenzyme is formed, which can initiate transcription.

The enzyme catalyses RNA(n) + a ribonucleoside 5'-triphosphate = RNA(n+1) + diphosphate. In terms of biological role, DNA-dependent RNA polymerase catalyzes the transcription of DNA into RNA using the four ribonucleoside triphosphates as substrates. In Campylobacter jejuni subsp. jejuni serotype O:6 (strain 81116 / NCTC 11828), this protein is DNA-directed RNA polymerase subunit alpha.